Reading from the N-terminus, the 324-residue chain is tRNA dimethylallyltransferase (324 aa).

17–24 contributes to the ATP binding site; the sequence is GPTASGKT. Substrate is bound at residue 19 to 24; it reads TASGKT. Interaction with substrate tRNA stretches follow at residues 42 to 45, 166 to 170, 251 to 256, and 284 to 291; these read DSAL, QRIQR, RCVGYR, and KRQITWLR.

Belongs to the IPP transferase family. Monomer. Requires Mg(2+) as cofactor.

It catalyses the reaction adenosine(37) in tRNA + dimethylallyl diphosphate = N(6)-dimethylallyladenosine(37) in tRNA + diphosphate. Functionally, catalyzes the transfer of a dimethylallyl group onto the adenine at position 37 in tRNAs that read codons beginning with uridine, leading to the formation of N6-(dimethylallyl)adenosine (i(6)A). This Burkholderia vietnamiensis (strain G4 / LMG 22486) (Burkholderia cepacia (strain R1808)) protein is tRNA dimethylallyltransferase.